Here is a 371-residue protein sequence, read N- to C-terminus: Forkhead box protein E1 (371 aa).

The tract at residues 21–53 (EERGEAAAAGAGVPAEAAGRGAGGRRRKRPLQR) is disordered. Over residues 26 to 39 (AAAAGAGVPAEAAG) the composition is skewed to low complexity. The segment covering 43–52 (GGRRRKRPLQ) has biased composition (basic residues). A DNA-binding region (fork-head) is located at residues 55-149 (KPPYSYIALI…ESGSFLRRRK (95 aa)).

In terms of processing, phosphorylated. Expressed in Rathke pouch, in thyroid, and in the epithelium of the pharyngeal wall and arches, whereas it is absent in the epithelium of the pharyngeal pouches.

The protein resides in the nucleus. Transcription factor that binds consensus sites on a variety of gene promoters and activate their transcription. Involved in proper palate formation, most probably through the expression of MSX1 and TGFB3 genes which are direct targets of this transcription factor. Also implicated in thyroid gland morphogenesis. May indirectly play a role in cell growth and migration through the regulation of WNT5A expression. The chain is Forkhead box protein E1 (Foxe1) from Mus musculus (Mouse).